Reading from the N-terminus, the 384-residue chain is MTLPELPKDLVEEILSFVPATSLKRLRSTCKGWNRLFKDDKRFTRIHTEKAAKQFQPLTLTKNYRICPINVNLHGTTPSLEVKNEVSLLDPHSKNSAAQFNIDRVFHCDGLLLCTSQKDSRFVVWNPLTGVTKWIELGDRYNEGMAFILGYDNKSCNKSYKAMSFNYLDKDSEIYEFSSDSWRVIDDIIKPPHYMDYFRECFSLKGNTYWLGIDRRRRPPDLRITLIKFDFGTEKFGYVSLPPPCQVHGFEASNLSVVGDEKLSVLVQAGSTSKTEVWVTSKIGEANVVSWSKVLSLYPKPDVGFWHGLSFLLDEEKKVFLCCKSKGWMEEEDEDNVYIVGEDNKFILLNFGVETIGGESPIITTYVPSLVQIELAGSKRKTDY.

The region spanning Met1 to Ile46 is the F-box domain.

This is F-box protein At2g07140 from Arabidopsis thaliana (Mouse-ear cress).